Consider the following 1391-residue polypeptide: DNA-directed RNA polymerase subunit beta (1391 aa).

The protein belongs to the RNA polymerase beta chain family. As to quaternary structure, the RNAP catalytic core consists of 2 alpha, 1 beta, 1 beta' and 1 omega subunit. When a sigma factor is associated with the core the holoenzyme is formed, which can initiate transcription.

The catalysed reaction is RNA(n) + a ribonucleoside 5'-triphosphate = RNA(n+1) + diphosphate. Its function is as follows. DNA-dependent RNA polymerase catalyzes the transcription of DNA into RNA using the four ribonucleoside triphosphates as substrates. This Mycoplasma pneumoniae (strain ATCC 29342 / M129 / Subtype 1) (Mycoplasmoides pneumoniae) protein is DNA-directed RNA polymerase subunit beta.